A 311-amino-acid chain; its full sequence is CID domain-containing protein 1 (311 aa).

In terms of domain architecture, CID spans 1-134 (MSDFTEQTLR…RLQEAHQQMK (134 aa)). The stretch at 224-256 (MLEDYVKRLKEETKERESLETNLNMLIQNVRMS) forms a coiled coil.

This Caenorhabditis briggsae protein is CID domain-containing protein 1 (cids-1).